The following is a 293-amino-acid chain: Exosome complex component RRP4 (293 aa).

The S1 motif domain maps to 79–159 (EVGDIVVGRI…SDGAVSLHTR (81 aa)). Ser-124 is modified (phosphoserine).

It belongs to the RRP4 family. As to quaternary structure, component of the RNA exosome core complex (Exo-9), composed of EXOSC1, EXOSC2, EXOSC3, EXOSC4, EXOSC5, EXOSC6, EXOSC7, EXOSC8 and EXOSC9; within the complex interacts with EXOSC4 and EXOSC7. The catalytically inactive RNA exosome core complex (Exo-9) associates with the catalytic subunit EXOSC10/RRP6. Exo-9 may associate with DIS3 to form the nucleolar exosome complex, or DIS3L to form the cytoplasmic exosome complex. Exo-9 is formed by a hexameric base ring consisting of the heterodimers EXOSC4-EXOSC9, EXOSC5-EXOSC8 and EXOSC6-EXOSC7, and a cap ring consisting of EXOSC1, EXOSC2 and EXOSC3. The RNA exosome complex associates with cofactors C1D/RRP47, MPHOSPH6/MPP6 and MTREX/MTR4. Interacts with GTPBP1. Interacts with ZFP36L1 (via N-terminus).

It localises to the cytoplasm. It is found in the nucleus. The protein localises to the nucleolus. Functionally, non-catalytic component of the RNA exosome complex which has 3'-&gt;5' exoribonuclease activity and participates in a multitude of cellular RNA processing and degradation events. In the nucleus, the RNA exosome complex is involved in proper maturation of stable RNA species such as rRNA, snRNA and snoRNA, in the elimination of RNA processing by-products and non-coding 'pervasive' transcripts, such as antisense RNA species and promoter-upstream transcripts (PROMPTs), and of mRNAs with processing defects, thereby limiting or excluding their export to the cytoplasm. The RNA exosome may be involved in Ig class switch recombination (CSR) and/or Ig variable region somatic hypermutation (SHM) by targeting AICDA deamination activity to transcribed dsDNA substrates. In the cytoplasm, the RNA exosome complex is involved in general mRNA turnover and specifically degrades inherently unstable mRNAs containing AU-rich elements (AREs) within their 3' untranslated regions, and in RNA surveillance pathways, preventing translation of aberrant mRNAs. It seems to be involved in degradation of histone mRNA. The catalytic inactive RNA exosome core complex of 9 subunits (Exo-9) is proposed to play a pivotal role in the binding and presentation of RNA for ribonucleolysis, and to serve as a scaffold for the association with catalytic subunits and accessory proteins or complexes. EXOSC2 as peripheral part of the Exo-9 complex stabilizes the hexameric ring of RNase PH-domain subunits through contacts with EXOSC4 and EXOSC7. The protein is Exosome complex component RRP4 (EXOSC2) of Bos taurus (Bovine).